Reading from the N-terminus, the 650-residue chain is Acetyl-coenzyme A synthetase (650 aa).

CoA is bound by residues Arg-191–Arg-194, Thr-311, and Asn-335. Residues Gly-387–Pro-389, Asp-411–Thr-416, Asp-500, and Arg-515 each bind ATP. A CoA-binding site is contributed by Ser-523. Arg-526 is an ATP binding site. Positions 537, 539, and 542 each coordinate Mg(2+). Arg-584 serves as a coordination point for CoA. At Lys-609 the chain carries N6-acetyllysine.

The protein belongs to the ATP-dependent AMP-binding enzyme family. The cofactor is Mg(2+). In terms of processing, acetylated. Deacetylation by the SIR2-homolog deacetylase activates the enzyme.

The enzyme catalyses acetate + ATP + CoA = acetyl-CoA + AMP + diphosphate. Its function is as follows. Catalyzes the conversion of acetate into acetyl-CoA (AcCoA), an essential intermediate at the junction of anabolic and catabolic pathways. AcsA undergoes a two-step reaction. In the first half reaction, AcsA combines acetate with ATP to form acetyl-adenylate (AcAMP) intermediate. In the second half reaction, it can then transfer the acetyl group from AcAMP to the sulfhydryl group of CoA, forming the product AcCoA. The protein is Acetyl-coenzyme A synthetase of Shewanella frigidimarina (strain NCIMB 400).